Consider the following 587-residue polypeptide: Putative gustatory receptor 59b (587 aa).

Residues 1–4 (MPSY) lie on the Cytoplasmic side of the membrane. The helical transmembrane segment at 5-25 (MAFTPYIMFSTNYAAIAYILI) threads the bilayer. Residues 26–62 (SRCYRDSMLLDLQRITLEVNREMLRTGKKMNSLIRRM) are Extracellular-facing. Residues 63–83 (FFLKTFTLTYSCLSYILAVLV) traverse the membrane as a helical segment. At 84 to 97 (YQWRAQNWSNLFNG) the chain is on the cytoplasmic side. A helical membrane pass occupies residues 98–118 (LLVNISLTILVVTTFFYFVSL). Residues 119–277 (MHVARGFDFV…CGLYPVNKAK (159 aa)) lie on the Extracellular side of the membrane. The N-linked (GlcNAc...) asparagine glycan is linked to asparagine 159. A helical membrane pass occupies residues 278–298 (WLEMVASIVVHSIMLFQFHLV). The Cytoplasmic segment spans residues 299 to 309 (MRGGYTTLFSR). Residues 310–330 (TYALLANIITLTMLPIVMWQV) form a helical membrane-spanning segment. Residues 331-403 (RSVFLAKRHY…GIDGVRRSLR (73 aa)) are Extracellular-facing. Residues 404-424 (ILLFVKFFTLSWLCITDIIFL) form a helical membrane-spanning segment. The Cytoplasmic portion of the chain corresponds to 425-518 (FYSSDAVIWV…IYAPQMLATR (94 aa)). The chain crosses the membrane as a helical span at residues 519-539 (FDHFVIGVIQAYWGAVFTFDL). Residues 540–587 (STSFLWVVYGSVQYHVRSLDYYLIDYMCDVAVEYHDSARHSWSEKECY) lie on the Extracellular side of the membrane.

It belongs to the insect chemoreceptor superfamily. Gustatory receptor (GR) family. Gr22e subfamily.

It localises to the cell membrane. Functionally, probable gustatory receptor which mediates acceptance or avoidance behavior, depending on its substrates. This chain is Putative gustatory receptor 59b, found in Drosophila erecta (Fruit fly).